The chain runs to 402 residues: Bacteriochlorophyllide c C-7(1)-hydroxylase (402 aa).

Residues 104 to 359 (VIGMNQDIIN…IKYQDRFDMP (256 aa)) form the Radical SAM core domain. Positions 120, 129, and 132 each coordinate [4Fe-4S] cluster.

It belongs to the radical SAM superfamily. It depends on [4Fe-4S] cluster as a cofactor.

The enzyme catalyses a bacteriochlorophyllide c + 2 S-adenosyl-L-methionine + H2O = a bacteriochlorophyllide e + 2 5'-deoxyadenosine + 2 L-methionine + 2 H(+). The catalysed reaction is a bacteriochlorophyllide d + 2 S-adenosyl-L-methionine + H2O = a bacteriochlorophyllide f + 2 5'-deoxyadenosine + 2 L-methionine + 2 H(+). It functions in the pathway porphyrin-containing compound metabolism; bacteriochlorophyll biosynthesis. Its function is as follows. Involved in the biosynthesis of bacteriochlorophyll e (BChl e). Catalyzes two consecutive hydroxylation reactions of the C-7 methyl group of bacteriochlorophyllide c (BChlide c) to form a geminal diol intermediate that spontaneously dehydrates to produce the formyl group of bacteriochlorophyllide e (BChlide e). Also able to catalyze the same reaction for bacteriochlorophyllide d (BChlide d) to give rise to bacteriochlorophyllide f (BChlide f). The chain is Bacteriochlorophyllide c C-7(1)-hydroxylase from Chlorobaculum limnaeum.